The primary structure comprises 136 residues: Large ribosomal subunit protein eL27 (136 aa).

A KOW domain is found at 5 to 40; that stretch reads MKPGKVVMVLAGRYAGRKAVIVKNIDDGTADRPYSH.

The protein belongs to the eukaryotic ribosomal protein eL27 family. In terms of assembly, component of the large ribosomal subunit.

The protein resides in the cytoplasm. It is found in the cytosol. Its subcellular location is the rough endoplasmic reticulum. Component of the large ribosomal subunit. This Ictalurus punctatus (Channel catfish) protein is Large ribosomal subunit protein eL27 (rpl27).